An 81-amino-acid chain; its full sequence is Putative membrane protein insertion efficiency factor (81 aa).

It belongs to the UPF0161 family.

Its subcellular location is the cell inner membrane. Could be involved in insertion of integral membrane proteins into the membrane. The sequence is that of Putative membrane protein insertion efficiency factor from Legionella pneumophila subsp. pneumophila (strain Philadelphia 1 / ATCC 33152 / DSM 7513).